A 350-amino-acid chain; its full sequence is Uroporphyrinogen decarboxylase (350 aa).

Substrate is bound by residues 23–27 (RQAGR), Asp-72, Tyr-149, Ser-204, and His-318.

The protein belongs to the uroporphyrinogen decarboxylase family. In terms of assembly, homodimer.

Its subcellular location is the cytoplasm. The catalysed reaction is uroporphyrinogen III + 4 H(+) = coproporphyrinogen III + 4 CO2. It participates in porphyrin-containing compound metabolism; protoporphyrin-IX biosynthesis; coproporphyrinogen-III from 5-aminolevulinate: step 4/4. In terms of biological role, catalyzes the decarboxylation of four acetate groups of uroporphyrinogen-III to yield coproporphyrinogen-III. The protein is Uroporphyrinogen decarboxylase of Carboxydothermus hydrogenoformans (strain ATCC BAA-161 / DSM 6008 / Z-2901).